A 560-amino-acid polypeptide reads, in one-letter code: Long-chain-fatty-acid--CoA ligase (560 aa).

This sequence belongs to the ATP-dependent AMP-binding enzyme family.

The enzyme catalyses a long-chain fatty acid + ATP + CoA = a long-chain fatty acyl-CoA + AMP + diphosphate. In Bacillus subtilis (strain 168), this protein is Long-chain-fatty-acid--CoA ligase (lcfA).